We begin with the raw amino-acid sequence, 395 residues long: 1-deoxy-D-xylulose 5-phosphate reductoisomerase (395 aa).

Residues threonine 10, glycine 11, serine 12, isoleucine 13, and asparagine 123 each contribute to the NADPH site. Position 124 (lysine 124) interacts with 1-deoxy-D-xylulose 5-phosphate. An NADPH-binding site is contributed by glutamate 125. Aspartate 149 provides a ligand contact to Mn(2+). The 1-deoxy-D-xylulose 5-phosphate site is built by serine 150, glutamate 151, serine 185, and histidine 208. Glutamate 151 provides a ligand contact to Mn(2+). Glycine 214 lines the NADPH pocket. 1-deoxy-D-xylulose 5-phosphate contacts are provided by serine 221, asparagine 226, lysine 227, and glutamate 230. Mn(2+) is bound at residue glutamate 230.

Belongs to the DXR family. The cofactor is Mg(2+). Mn(2+) is required as a cofactor.

The enzyme catalyses 2-C-methyl-D-erythritol 4-phosphate + NADP(+) = 1-deoxy-D-xylulose 5-phosphate + NADPH + H(+). It participates in isoprenoid biosynthesis; isopentenyl diphosphate biosynthesis via DXP pathway; isopentenyl diphosphate from 1-deoxy-D-xylulose 5-phosphate: step 1/6. Catalyzes the NADPH-dependent rearrangement and reduction of 1-deoxy-D-xylulose-5-phosphate (DXP) to 2-C-methyl-D-erythritol 4-phosphate (MEP). The chain is 1-deoxy-D-xylulose 5-phosphate reductoisomerase from Shewanella sediminis (strain HAW-EB3).